A 201-amino-acid polypeptide reads, in one-letter code: UPF0056 membrane protein PYRAB13050 (201 aa).

Transmembrane regions (helical) follow at residues 8 to 28 (FAVLYVGLFAITNPVGAVPIF), 49 to 69 (ITVLVTLLTFALVGKWIFKFF), 73 to 93 (VDAFAIAGGILLFRMGMEMLS), 111 to 131 (VAVIPLAIPLISGPGAITTVM), 140 to 160 (PIVIATIIAIGISVYIILASG), and 181 to 201 (LILTSMAIQMIINGIKGAFGI).

The protein belongs to the UPF0056 (MarC) family.

The protein localises to the cell membrane. The sequence is that of UPF0056 membrane protein PYRAB13050 from Pyrococcus abyssi (strain GE5 / Orsay).